A 333-amino-acid chain; its full sequence is Mycothiol acetyltransferase (333 aa).

2 N-acetyltransferase domains span residues 18 to 170 (PTLS…LPEP) and 176 to 333 (VTVR…AAAD). Residue Glu-46 coordinates 1D-myo-inositol 2-(L-cysteinylamino)-2-deoxy-alpha-D-glucopyranoside. 98-100 (IVV) is a binding site for acetyl-CoA. Positions 203, 242, and 261 each coordinate 1D-myo-inositol 2-(L-cysteinylamino)-2-deoxy-alpha-D-glucopyranoside. Residues 265–267 (VGV) and 272–278 (GGAGLGR) each bind acetyl-CoA. Tyr-299 contributes to the 1D-myo-inositol 2-(L-cysteinylamino)-2-deoxy-alpha-D-glucopyranoside binding site. 304–309 (NERAVR) contributes to the acetyl-CoA binding site.

It belongs to the acetyltransferase family. MshD subfamily. As to quaternary structure, monomer.

It carries out the reaction 1D-myo-inositol 2-(L-cysteinylamino)-2-deoxy-alpha-D-glucopyranoside + acetyl-CoA = mycothiol + CoA + H(+). In terms of biological role, catalyzes the transfer of acetyl from acetyl-CoA to desacetylmycothiol (Cys-GlcN-Ins) to form mycothiol. The sequence is that of Mycothiol acetyltransferase from Frankia alni (strain DSM 45986 / CECT 9034 / ACN14a).